We begin with the raw amino-acid sequence, 388 residues long: Succinate--CoA ligase [ADP-forming] subunit beta (388 aa).

Residues 9–244 form the ATP-grasp domain; it reads KQLFAEYGLP…PSQDDAREAH (236 aa). ATP contacts are provided by residues Lys46, 53–55, Glu99, Thr102, and Glu107; that span reads GRG. 2 residues coordinate Mg(2+): Asn199 and Asp213. Substrate-binding positions include Asn264 and 321-323; that span reads GIV.

The protein belongs to the succinate/malate CoA ligase beta subunit family. Heterotetramer of two alpha and two beta subunits. It depends on Mg(2+) as a cofactor.

It catalyses the reaction succinate + ATP + CoA = succinyl-CoA + ADP + phosphate. It carries out the reaction GTP + succinate + CoA = succinyl-CoA + GDP + phosphate. The protein operates within carbohydrate metabolism; tricarboxylic acid cycle; succinate from succinyl-CoA (ligase route): step 1/1. Its function is as follows. Succinyl-CoA synthetase functions in the citric acid cycle (TCA), coupling the hydrolysis of succinyl-CoA to the synthesis of either ATP or GTP and thus represents the only step of substrate-level phosphorylation in the TCA. The beta subunit provides nucleotide specificity of the enzyme and binds the substrate succinate, while the binding sites for coenzyme A and phosphate are found in the alpha subunit. The chain is Succinate--CoA ligase [ADP-forming] subunit beta from Pseudomonas putida (strain ATCC 700007 / DSM 6899 / JCM 31910 / BCRC 17059 / LMG 24140 / F1).